We begin with the raw amino-acid sequence, 87 residues long: Putative defensin-like protein 304 (87 aa).

An N-terminal signal peptide occupies residues 1–19; the sequence is MKSNKVTFFLGLFLVSAFC. 3 disulfide bridges follow: C27/C46, C33/C51, and C40/C53.

The protein belongs to the DEFL family.

It localises to the secreted. The chain is Putative defensin-like protein 304 from Arabidopsis thaliana (Mouse-ear cress).